A 30-amino-acid chain; its full sequence is Brevinin-2Rj (30 aa).

Cys-24 and Cys-30 are disulfide-bonded.

As to expression, expressed by the skin glands.

It is found in the secreted. Its function is as follows. Antimicrobial peptide. This is Brevinin-2Rj from Pelophylax ridibundus (Marsh frog).